The sequence spans 329 residues: MPISTKSSFYLPAVDISPYLQDPNSDAARKVIDDVRAACTSTGFFQLLGHGISPALQQSVFAAAAKFFALPSDVKSRCRNVGFRGYDPMASQSYELGVLPDLKEGFIAGKDIPLDDPRVASQRFFMGQNAWPPSELLPEANFRRPIEEYYQAMLKLCWVVLDLVAATLPYGPHVFDEFKENDPACPLRLLHYPPAPAPDVAKGRQLGSSAHTDFGAITLLLQDDHSGLEVQDCETGEWIGVPPNKDAYVVNLGDMMSRITRGHYKSSIHRVINQNLTDRYSVVFFFDGNLDYRLRPLDRVGQNWDEEDTLTVEEHMLERTTTTYNLKVK.

Positions proline 183–glycine 288 constitute a Fe2OG dioxygenase domain. Residues histidine 211, aspartate 213, and histidine 269 each coordinate Fe cation. 2-oxoglutarate is bound at residue arginine 279.

It belongs to the iron/ascorbate-dependent oxidoreductase family. It depends on Fe(2+) as a cofactor.

It functions in the pathway mycotoxin biosynthesis. Functionally, 2-oxoglutarate-dependent dioxygenase; part of the gene cluster that mediates the biosynthesis of the mycotoxin citrinin, a hepato-nephrotoxic compound to humans due to inhibition of respiration complex III. The pathway begins with the synthesis of a keto-aldehyde intermediate by the citrinin PKS (pksCT) from successive condensations of 4 malonyl-CoA units, presumably with a simple acetyl-CoA starter unit. Release of the keto-aldehyde intermediate is consistent with the presence of the C-terminal reductive release domain. Mp11 collaborates with pksCT by catalyzing the hydrolysis of ACP-bound acyl intermediates to free the ACP from stalled intermediates. Mpl2 then catalyzes the oxidation of the C-12 methyl of the ketone intermediate to an alcohol intermediate which is further oxidized by the oxidoreductase mpl7 to produce a bisaldehyde intermediate. The fourth catalytic step is catalyzed by the mpl4 aldehyde dehydrogenase. The final transformation is the reduction of C-3 by mpl6 to provide the chemically stable citrinin nucleus. In Monascus purpureus (Red mold), this protein is 2-oxoglutarate-dependent dioxygenase mpl2.